The following is a 186-amino-acid chain: dCTP deaminase (186 aa).

107 to 112 provides a ligand contact to dCTP; sequence KSTYAR. E133 serves as the catalytic Proton donor/acceptor. Q152, Y166, and Q176 together coordinate dCTP.

The protein belongs to the dCTP deaminase family. As to quaternary structure, homotrimer.

The catalysed reaction is dCTP + H2O + H(+) = dUTP + NH4(+). Its pathway is pyrimidine metabolism; dUMP biosynthesis; dUMP from dCTP (dUTP route): step 1/2. Catalyzes the deamination of dCTP to dUTP. In Campylobacter lari (strain RM2100 / D67 / ATCC BAA-1060), this protein is dCTP deaminase.